A 552-amino-acid polypeptide reads, in one-letter code: BAR/IMD domain-containing adapter protein 2 (552 aa).

Positions 1 to 250 (MSLSRSEEMH…VQLMQQVASN (250 aa)) constitute an IMD domain. Positions 132–153 (DALDKCQAELKKLRKKSQGSKN) form a coiled coil. At Ser261 the chain carries Phosphoserine. The tract at residues 295 to 369 (STPIMNGVTG…TLPRSSSMAA (75 aa)) is disordered. Thr296 carries the post-translational modification Phosphothreonine. A compositionally biased stretch (low complexity) spans 320 to 334 (QPKSLSPPQSQSKLS). A phosphoserine mark is found at Ser323, Ser325, and Ser336. Position 340 is a phosphothreonine (Thr340). Ser346 carries the post-translational modification Phosphoserine. Residues 348 to 367 (TPKNSYATTENKTLPRSSSM) are compositionally biased toward polar residues. Thr360 is modified (phosphothreonine). Phosphoserine occurs at positions 366, 384, 395, and 454. An SH3 domain is found at 374-437 (NGRMRVKAIF…PFSYTRVLDS (64 aa)). Residues 447–457 (LQQGKSSSTGN) are compositionally biased toward polar residues. 2 disordered regions span residues 447–466 (LQQGKSSSTGNLLDKDDLAI) and 525–552 (TNDRCDLSAQGPEGREHGDGSARTLAGR).

As to quaternary structure, homodimer. Interacts with CDC42 and RAC1 that have been activated by GTP binding. Interacts with ATN1, ADGRB1, EPS8, SHANK1, SHANK2, SHANK3, WASF1 and WASF2. Interacts with ENAH after recruitment of CDC42. Interacts with TIAM1 and DIAPH1. Interacts (via SH3 domain) with E.coli effector protein EspF(U) (via PXXP motifs). Interacts with E.coli intimin receptor Tir. In terms of processing, phosphorylated on tyrosine residues by INSR in response to insulin treatment. As to expression, isoform 1 and isoform 4 are expressed almost exclusively in brain. Isoform 4 is barely detectable in placenta, prostate and testis. A short isoform is ubiquitous, with the highest expression in liver, prostate, testis and placenta.

The protein resides in the cytoplasm. It localises to the membrane. It is found in the cell projection. The protein localises to the filopodium. Its subcellular location is the ruffle. The protein resides in the cytoskeleton. In terms of biological role, adapter protein that links membrane-bound small G-proteins to cytoplasmic effector proteins. Necessary for CDC42-mediated reorganization of the actin cytoskeleton and for RAC1-mediated membrane ruffling. Involved in the regulation of the actin cytoskeleton by WASF family members and the Arp2/3 complex. Plays a role in neurite growth. Acts syngeristically with ENAH to promote filipodia formation. Plays a role in the reorganization of the actin cytoskeleton in response to bacterial infection. Participates in actin bundling when associated with EPS8, promoting filopodial protrusions. The polypeptide is BAR/IMD domain-containing adapter protein 2 (BAIAP2) (Homo sapiens (Human)).